An 86-amino-acid chain; its full sequence is RNA-binding protein Hfq (86 aa).

The 60-residue stretch at 9–68 (DPYLNTLRKEKVGVSIYLVNGIKLQGTIESFDQFVILLKNTVSQMVYKHAISTVVPVRPI) folds into the Sm domain.

Belongs to the Hfq family. Homohexamer.

RNA chaperone that binds small regulatory RNA (sRNAs) and mRNAs to facilitate mRNA translational regulation in response to envelope stress, environmental stress and changes in metabolite concentrations. Also binds with high specificity to tRNAs. This chain is RNA-binding protein Hfq, found in Pseudomonas fluorescens (strain Pf0-1).